The chain runs to 963 residues: MPGAGARAEEGGGGGEGAAQGAAAEPGAGPAREPARLCGYLQKLSGKGPLRGYRSRWFVFDARRCYLYYFKSPQDALPLGHLDIADACFSYQGPDEAAEPGTEPPAHFQVHSAGAVTVLKAPNRQLMTYWLQELQQKRWEYCNSLDMVKWDSRTSPTPGDFPKGLVARDNTDLIYPHPNASAEKARNVLAVETVPGELVGEQAANQPAPGHPNSINFYSLKQWGNELKNSMSSFRPGRGHNDSRRTVFYTNEEWELLDPTPKDLEESIVQEEKKKLTPEGNKGVTGSGFPFDFGRNPYKGKRPLKDIIGSYKNRHSSGDPSSEGTSGSGSVSIRKPASEMQLQVQSQQEELEQLKKDLSSQKELVRLLQQTVRSSQYDKYFTSSRLCEGVPKDTLELLHQKDDQILGLTSQLERFSLEKESLQQEVRTLKSKVGELNEQLGMLMETIQAKDEVIIKLSEGEGNGPPPTVAPSSPSVVPVARDQLELDRLKDNLQGYKTQNKFLNKEILELSALRRNAERRERDLMAKYSSLEAKLCQIESKYLILLQEMKTPVCSEDQGPTREVIAQLLEDALQVESQEQPEQAFVKPHLVSEYDIYGFRTVPEDDEEEKLVAKVRALDLKTLYLTENQEVSTGVKWENYFASTVNREMMCSPELKNLIRAGIPHEHRSKVWKWCVDRHTRKFKDNTEPGHFQTLLQKALEKQNPASKQIELDLLRTLPNNKHYSCPTSEGIQKLRNVLLAFSWRNPDIGYCQGLNRLVAVALLYLEQEDAFWCLVTIVEVFMPRDYYTKTLLGSQVDQRVFRDLMSEKLPRLHGHFEQYKVDYTLITFNWFLVVFVDSVVSDILFKIWDSFLYEGPKVIFRFALALFKYKEEEILKLQDSMSIFKYLRYFTRTILDARKLISISFGDLNPFPLRQIRNRRAYHLEKVRLELTELEAIREDFLRERDTSPDKGELVSDEEEDT.

The interval 1–30 is disordered; that stretch reads MPGAGARAEEGGGGGEGAAQGAAAEPGAGP. The segment covering 19–30 has biased composition (low complexity); sequence AQGAAAEPGAGP. The PH domain maps to 34–139; that stretch reads PARLCGYLQK…WLQELQQKRW (106 aa). A phosphoserine mark is found at Ser155 and Ser317. A disordered region spans residues 272 to 348; it reads EKKKLTPEGN…EMQLQVQSQQ (77 aa). Residues 318–348 are compositionally biased toward low complexity; that stretch reads GDPSSEGTSGSGSVSIRKPASEMQLQVQSQQ. Positions 337–535 form a coiled coil; that stretch reads ASEMQLQVQS…AKYSSLEAKL (199 aa). The residue at position 473 (Ser473) is a Phosphoserine. Residues 662–856 form the Rab-GAP TBC domain; the sequence is GIPHEHRSKV…KIWDSFLYEG (195 aa). Position 957 is a phosphoserine (Ser957).

It is found in the early endosome. Functionally, GTPase-activating protein that plays a role in the early steps of endocytosis. The polypeptide is TBC1 domain family member 2B (TBC1D2B) (Homo sapiens (Human)).